The primary structure comprises 335 residues: Deoxyhypusine hydroxylase (335 aa).

HEAT-like PBS-type repeat units follow at residues 71–97 (LKHE…VAKD), 104–130 (CRHE…LRDN), 200–233 (LRYR…GLKD), 238–264 (FRHE…ALSN), and 271–298 (VRHE…FLND). Residues His73, Glu74, His106, and Glu107 each contribute to the Fe cation site. Residues His240, Glu241, His273, and Glu274 each coordinate Fe cation.

The protein belongs to the deoxyhypusine hydroxylase family. Fe(2+) is required as a cofactor.

The protein resides in the cytoplasm. Its subcellular location is the nucleus. The enzyme catalyses [eIF5A protein]-deoxyhypusine + AH2 + O2 = [eIF5A protein]-hypusine + A + H2O. It participates in protein modification; eIF5A hypusination. Its function is as follows. Catalyzes the hydroxylation of the N(6)-(4-aminobutyl)-L-lysine intermediate to form hypusine, an essential post-translational modification only found in mature eIF-5A factor. The sequence is that of Deoxyhypusine hydroxylase (lia1) from Aspergillus fumigatus (strain ATCC MYA-4609 / CBS 101355 / FGSC A1100 / Af293) (Neosartorya fumigata).